Consider the following 128-residue polypeptide: MDGGLCFNSWSDYLGLSSLISRGLQPREGGESPRPRWKASSPTPAEPLPSKAAEAHGHKGCGFCRSNREAQSLYSSHRLRAPDGRVLCPVLRGYTCPLCGANGDWAHTMRYCPLRHFLRHPHSPRDGQ.

The segment at 7–23 (FNSWSDYLGLSSLISRG) is essential for its translational repressor activity. The disordered stretch occupies residues 23-58 (GLQPREGGESPRPRWKASSPTPAEPLPSKAAEAHGH). The segment at 60–114 (GCGFCRSNREAQSLYSSHRLRAPDGRVLCPVLRGYTCPLCGANGDWAHTMRYCPL) adopts a Nanos-type zinc-finger fold. Positions 61, 64, 77, 88, 96, 99, 107, and 112 each coordinate Zn(2+). Short sequence motifs (C2HC) lie at residues 61-88 (CGFC…RVLC) and 96-112 (CPLC…MRYC).

The protein belongs to the nanos family. As to quaternary structure, interacts with ccnb1.

The protein localises to the cytoplasm. The protein resides in the perinuclear region. Its function is as follows. Acts as a translational repressor. Can mediate repression affecting different steps in the translation process: cap-driven, IRES-driven, polyadenylated RNAs or nonpolyadenylated RNAs. Essential for the development of primordial germ cells (PGCs) by ensuring their proper migration and survival. The chain is Nanos homolog 1 (nanos1) from Xenopus tropicalis (Western clawed frog).